The primary structure comprises 372 residues: Cytochrome b (372 aa).

The next 4 helical transmembrane spans lie at 25 to 45, 69 to 90, 105 to 125, and 170 to 190; these read FGSM…FLAI, WIIQ…YTHI, WLSG…GYVL, and FFAL…IHII. H75 and H89 together coordinate heme b. Heme b-binding residues include H174 and H188. H193 contacts a ubiquinone. Helical transmembrane passes span 218–238, 280–300, 312–332, and 339–358; these read YKDT…MSFM, LGGT…PFTH, LTQI…WSAT, and FIFI…IINP.

It belongs to the cytochrome b family. The cytochrome bc1 complex contains 3 respiratory subunits (MT-CYB, CYC1 and UQCRFS1), 2 core proteins (UQCRC1 and UQCRC2) and probably 6 low-molecular weight proteins. It depends on heme b as a cofactor.

It is found in the mitochondrion inner membrane. Functionally, component of the ubiquinol-cytochrome c reductase complex (complex III or cytochrome b-c1 complex) that is part of the mitochondrial respiratory chain. The b-c1 complex mediates electron transfer from ubiquinol to cytochrome c. Contributes to the generation of a proton gradient across the mitochondrial membrane that is then used for ATP synthesis. This Hydrophis semperi (Lake Taal snake) protein is Cytochrome b (MT-CYB).